We begin with the raw amino-acid sequence, 118 residues long: Holo-[acyl-carrier-protein] synthase (118 aa).

Aspartate 8 and glutamate 58 together coordinate Mg(2+).

It belongs to the P-Pant transferase superfamily. AcpS family. The cofactor is Mg(2+).

It is found in the cytoplasm. It catalyses the reaction apo-[ACP] + CoA = holo-[ACP] + adenosine 3',5'-bisphosphate + H(+). In terms of biological role, transfers the 4'-phosphopantetheine moiety from coenzyme A to a Ser of acyl-carrier-protein. In Streptococcus pyogenes serotype M12 (strain MGAS2096), this protein is Holo-[acyl-carrier-protein] synthase.